Here is a 589-residue protein sequence, read N- to C-terminus: Early growth response protein 4 (589 aa).

Disordered regions lie at residues 29 to 101 (GSAL…HSRR), 383 to 411 (AEGL…ASTQ), and 436 to 466 (PGSS…GRRG). Over residues 76–86 (PLPPASPPPAR) the composition is skewed to pro residues. Residues 92–101 (ARPRAPHSRR) are compositionally biased toward basic residues. Residues 395-404 (GEGGSSGDGG) show a composition bias toward gly residues. The span at 444–454 (PPVPPPPPTPF) shows a compositional bias: pro residues. 3 consecutive C2H2-type zinc fingers follow at residues 483–507 (FACP…LRIH), 513–535 (FQCR…VRTH), and 541–563 (FACD…SKVH).

This sequence belongs to the EGR C2H2-type zinc-finger protein family.

It localises to the nucleus. Its function is as follows. Transcriptional regulator. Recognizes and binds to the DNA sequence 5'-GCGGGGGCG-3' (GSG). Activates the transcription of target genes whose products are required for mitogenesis and differentiation. This is Early growth response protein 4 (EGR4) from Homo sapiens (Human).